The primary structure comprises 101 residues: Small nuclear ribonucleoprotein Sm D3 (101 aa).

The region spanning 6 to 78 (IPVKLLNEAQ…IKFIVVPDLL (73 aa)) is the Sm domain.

Belongs to the snRNP core protein family. In terms of assembly, component of the Sm core complex, present in spliceosomal snRNP U1, U2, U4/U6 and U5. The core complex contains SMB1, SMD1, SMD2, SMD3, SME1, SMX3 and SMX2 (Sm proteins B, D1, D2, D3, E, F and G, respectively), and is probably a heptameric ring structure. SMD3 specifically interacts with SMB1. Belongs to the CWC complex (or CEF1-associated complex), a spliceosome sub-complex reminiscent of a late-stage spliceosome composed of the U2, U5 and U6 snRNAs and at least BUD13, BUD31, BRR2, CDC40, CEF1, CLF1, CUS1, CWC2, CWC15, CWC21, CWC22, CWC23, CWC24, CWC25, CWC27, ECM2, HSH155, IST3, ISY1, LEA1, MSL1, NTC20, PRP8, PRP9, PRP11, PRP19, PRP21, PRP22, PRP45, PRP46, SLU7, SMB1, SMD1, SMD2, SMD3, SMX2, SMX3, SNT309, SNU114, SPP2, SYF1, SYF2, RSE1 and YJU2. Component of the U4/U6-U5 tri-snRNP complex composed of the U4, U6 and U5 snRNAs and at least PRP3, PRP4, PRP6, PRP8, PRP18, PRP31, PRP38, SNU13, SNU23, SNU66, SNU114, SPP381, SMB1, SMD1, SMD2, SMD3, SMX2, SMX3, LSM2, LSM3, LSM4, LSM5, LSM6, LSM7, LSM8, BRR2 and DIB1.

Its subcellular location is the cytoplasm. It localises to the cytosol. The protein localises to the nucleus. Functionally, plays a role in pre-mRNA splicing as a core component of the spliceosomal U1, U2, U4 and U5 small nuclear ribonucleoproteins (snRNPs), the building blocks of the spliceosome. Also binds telomerase RNA and is required for its accumulation. The polypeptide is Small nuclear ribonucleoprotein Sm D3 (SMD3) (Saccharomyces cerevisiae (strain ATCC 204508 / S288c) (Baker's yeast)).